Consider the following 574-residue polypeptide: Membralin (574 aa).

A disordered region spans residues 1 to 27 (MSEHAAAPGPGPNGGGGGGAAPVRGPR). An N-acetylserine modification is found at Ser2. A helical transmembrane segment spans residues 69–89 (FFVLLKALFVLFVLAYIHIVF). An N-linked (GlcNAc...) asparagine glycan is attached at Asn180. 3 consecutive transmembrane segments (helical) span residues 293 to 313 (TSYL…SMLL), 337 to 357 (IAFP…MEAI), and 417 to 437 (YSSL…IYFF). Low complexity-rich tracts occupy residues 461-470 (LGPGTPTALP) and 491-501 (LGPSSSPAPTG). Disordered stretches follow at residues 461–515 (LGPG…GASV) and 546–574 (RRPT…PAGS).

It belongs to the membralin family. Interacts with ERLIN2. As to expression, detected in brain, spinal cord, lung, liver and kidney.

It localises to the endoplasmic reticulum membrane. Functionally, may have a role in the ERAD pathway required for clearance of misfolded proteins in the endoplasmic reticulum (ER). Promotes survival of motor neurons, probably by protecting against ER stress. This chain is Membralin (Tmem259), found in Mus musculus (Mouse).